We begin with the raw amino-acid sequence, 85 residues long: 4-hydroxyphenylacetate decarboxylase small subunit (85 aa).

Residues H4, C7, C20, C34, C43, C46, C60, and C78 each contribute to the [4Fe-4S] cluster site.

Belongs to the HPA decarboxylase small subunit family. Heterooctamer consisting of 4 large (HpdB) subunits and 4 small (HpdC) subunits, arranged as a tetramer of heterodimers. [4Fe-4S] cluster is required as a cofactor.

The catalysed reaction is 4-hydroxyphenylacetate + H(+) = 4-methylphenol + CO2. It carries out the reaction 3,4-dihydroxyphenylacetate + H(+) = 4-methylcatechol + CO2. Component of the HPA decarboxylase that decarboxylates phenylacetates with a hydroxyl group in the p-position. Active toward 4-hydroxyphenylacetate and 3,4-dihydroxyphenylacetate, forming 4-methylphenol and 4-methylcatechol, respectively. Is likely involved in the catabolism of aromatic amino acids such as tyrosine fermentation. 4-methylphenol (p-cresol) formation provides metabolic toxicity, which allows an active suppression of other microbes and may provide growth advantages for the producers in highly competitive environments. The small subunit is essential for enzymatic activity of HPA decarboxylase, and also seems to be involved in the regulation of the enzyme oligomeric state and catalytic activity. In Clostridioides difficile (strain 630) (Peptoclostridium difficile), this protein is 4-hydroxyphenylacetate decarboxylase small subunit.